The primary structure comprises 130 residues: MEWKIVVPLLAVAFTVANAGLVGGPMDANMNDQGTRDALQFAVVEHNKKTNDMFVRQVAKVVNAQKQVVSGMKYIFTVQMGRTPCRKGGVEKICSVHKDPQMAVPYKCTFEVWSRPWMSDIQMVKNQCES.

The first 19 residues, 1 to 19 (MEWKIVVPLLAVAFTVANA), serve as a signal peptide directing secretion. The short motif at 67-71 (QVVSG) is the Secondary area of contact element. Disulfide bonds link cysteine 85-cysteine 94 and cysteine 108-cysteine 128.

Belongs to the cystatin family. As to expression, ubiquitous expression including brain, white muscle, heart, gill, kidney, spleen, liver and skin with the highest and lowest level in brain and gill, respectively.

It is found in the secreted. Its function is as follows. Cysteine proteinase inhibitor. This Oncorhynchus keta (Chum salmon) protein is Cystatin.